The chain runs to 162 residues: Balbiani ring protein 2 (162 aa).

The segment at 1 to 31 (CDDAMRKTESDKCTNIGGKFDPSTCKCTPET) is last constant region. Positions 32-51 (VTEGPTTCLESSESDEVTTK) are last Cys-1 repeat. A unique region region spans residues 52 to 162 (KPCDCTCAPD…VKGLEDILNS (111 aa)).

As to expression, salivary gland.

It localises to the secreted. Functionally, used by the larvae to construct a supramolecular structure, the larval tube. The sequence is that of Balbiani ring protein 2 (BR2) from Chironomus pallidivittatus (Midge).